The primary structure comprises 475 residues: 3-isopropylmalate dehydratase large subunit (475 aa).

Positions 349, 409, and 412 each coordinate [4Fe-4S] cluster.

It belongs to the aconitase/IPM isomerase family. LeuC type 1 subfamily. Heterodimer of LeuC and LeuD. [4Fe-4S] cluster is required as a cofactor.

The enzyme catalyses (2R,3S)-3-isopropylmalate = (2S)-2-isopropylmalate. It participates in amino-acid biosynthesis; L-leucine biosynthesis; L-leucine from 3-methyl-2-oxobutanoate: step 2/4. Functionally, catalyzes the isomerization between 2-isopropylmalate and 3-isopropylmalate, via the formation of 2-isopropylmaleate. The chain is 3-isopropylmalate dehydratase large subunit from Cereibacter sphaeroides (strain ATCC 17029 / ATH 2.4.9) (Rhodobacter sphaeroides).